The chain runs to 177 residues: MSEFVTVARPYAKAAFDFAVEHQAVDRWQDMLAFTAQVTRNEQIAELLSGAVAPETMSKTFIAVCGDQLDEPAQNFIRVMAENGRLLVLPEVLLQFIQLRASLESTVDVEVSSASPLNDEQLAKIAAAMEKRLSRKVKLNCKIDKSVMAGVVIRAGDMVIDGSVRGRLERLADVLQS.

The protein belongs to the ATPase delta chain family. F-type ATPases have 2 components, F(1) - the catalytic core - and F(0) - the membrane proton channel. F(1) has five subunits: alpha(3), beta(3), gamma(1), delta(1), epsilon(1). F(0) has three main subunits: a(1), b(2) and c(10-14). The alpha and beta chains form an alternating ring which encloses part of the gamma chain. F(1) is attached to F(0) by a central stalk formed by the gamma and epsilon chains, while a peripheral stalk is formed by the delta and b chains.

The protein resides in the cell inner membrane. Its function is as follows. F(1)F(0) ATP synthase produces ATP from ADP in the presence of a proton or sodium gradient. F-type ATPases consist of two structural domains, F(1) containing the extramembraneous catalytic core and F(0) containing the membrane proton channel, linked together by a central stalk and a peripheral stalk. During catalysis, ATP synthesis in the catalytic domain of F(1) is coupled via a rotary mechanism of the central stalk subunits to proton translocation. This protein is part of the stalk that links CF(0) to CF(1). It either transmits conformational changes from CF(0) to CF(1) or is implicated in proton conduction. In Yersinia enterocolitica serotype O:8 / biotype 1B (strain NCTC 13174 / 8081), this protein is ATP synthase subunit delta.